A 975-amino-acid polypeptide reads, in one-letter code: Macrophage colony-stimulating factor 1 receptor 1 (975 aa).

An N-terminal signal peptide occupies residues 1-17 (MQSFLPLLMGIMASASS). At 18–519 (VEWRHPVIWF…VEVSDKLFTS (502 aa)) the chain is on the extracellular side. Ig-like C2-type domains are found at residues 34-113 (SSEV…VYVK), 125-208 (SLRV…INVI), 221-310 (MDEY…LLVV), 329-407 (GLSV…FHVK), and 404-513 (FHVK…VEVS). 3 cysteine pairs are disulfide-bonded: C49/C93, C140/C189, and C236/C292. 9 N-linked (GlcNAc...) asparagine glycosylation sites follow: N156, N165, N246, N250, N289, N301, N399, N420, and N451. A disulfide bridge links C426 with C495. A helical transmembrane segment spans residues 520–540 (TLIGAAGVLAIFLLLLVFLLY). Residues 541–975 (KYKQKPRFEI…LMKTNNYQFC (435 aa)) lie on the Cytoplasmic side of the membrane. The tract at residues 544–576 (QKPRFEIRWKIIEAREGNNYTFIDPTQLPYNEK) is regulatory juxtamembrane domain. Phosphotyrosine; by autocatalysis is present on Y563. The Protein kinase domain occupies 584-918 (LKLGKVLGAG…MISQMINRLL (335 aa)). Residues 590-598 (LGAGAFGKV) and K619 contribute to the ATP site. A phosphotyrosine; by autocatalysis mark is found at Y702 and Y726. D782 (proton acceptor) is an active-site residue. The tract at residues 800-822 (DFGLARDIMNDSNYVVKGNARLP) is activation loop. A phosphotyrosine; by autocatalysis mark is found at Y813 and Y929. The tract at residues 939–963 (EGEACDEPKRYDPPCERSCDHEEEE) is disordered. The segment covering 944 to 958 (DEPKRYDPPCERSCD) has biased composition (basic and acidic residues). Position 972 is a phosphotyrosine; by autocatalysis (Y972).

It belongs to the protein kinase superfamily. Tyr protein kinase family. CSF-1/PDGF receptor subfamily. Monomer. Homodimer. Interacts with CSF1. Autophosphorylated in response to CSF1 binding. autophosphorylation, leading to its degradation. In terms of processing, ubiquitinated. Becomes rapidly polyubiquitinated after autophosphorylation, leading to its degradation.

The protein resides in the cell membrane. It catalyses the reaction L-tyrosyl-[protein] + ATP = O-phospho-L-tyrosyl-[protein] + ADP + H(+). Present in an inactive conformation in the absence of bound ligand. CSF1 binding leads to dimerization and activation by autophosphorylation on tyrosine residues. Its function is as follows. Tyrosine-protein kinase that acts as a cell-surface receptor for CSF1 and plays an essential role in the regulation of survival, proliferation and differentiation of hematopoietic precursor cells, especially mononuclear phagocytes, such as macrophages and monocytes. Plays an important role in innate immunity and in inflammatory processes. Plays an important role in the regulation of osteoclast proliferation and differentiation, the regulation of bone resorption, and is required for normal bone development. Promotes reorganization of the actin cytoskeleton, regulates formation of membrane ruffles, cell adhesion and cell migration. Activates several signaling pathways in response to ligand binding. In Takifugu rubripes (Japanese pufferfish), this protein is Macrophage colony-stimulating factor 1 receptor 1 (csf1r1).